The following is a 127-amino-acid chain: Large ribosomal subunit protein bL12 (127 aa).

The protein belongs to the bacterial ribosomal protein bL12 family. In terms of assembly, homodimer. Part of the ribosomal stalk of the 50S ribosomal subunit. Forms a multimeric L10(L12)X complex, where L10 forms an elongated spine to which 2 to 4 L12 dimers bind in a sequential fashion. Binds GTP-bound translation factors.

In terms of biological role, forms part of the ribosomal stalk which helps the ribosome interact with GTP-bound translation factors. Is thus essential for accurate translation. This is Large ribosomal subunit protein bL12 from Streptococcus thermophilus (strain CNRZ 1066).